Consider the following 275-residue polypeptide: Aliphatic sulfonates import ATP-binding protein SsuB 1 (275 aa).

An ABC transporter domain is found at isoleucine 34 to leucine 260. Glycine 66–serine 73 provides a ligand contact to ATP.

This sequence belongs to the ABC transporter superfamily. Aliphatic sulfonates importer (TC 3.A.1.17.2) family. In terms of assembly, the complex is composed of two ATP-binding proteins (SsuB), two transmembrane proteins (SsuC) and a solute-binding protein (SsuA).

It localises to the cell inner membrane. The enzyme catalyses ATP + H2O + aliphatic sulfonate-[sulfonate-binding protein]Side 1 = ADP + phosphate + aliphatic sulfonateSide 2 + [sulfonate-binding protein]Side 1.. In terms of biological role, part of the ABC transporter complex SsuABC involved in aliphatic sulfonates import. Responsible for energy coupling to the transport system. The sequence is that of Aliphatic sulfonates import ATP-binding protein SsuB 1 from Rhizobium johnstonii (strain DSM 114642 / LMG 32736 / 3841) (Rhizobium leguminosarum bv. viciae).